The following is a 45-amino-acid chain: MKCGRKRRRRRRHACKRKKRACKQRSSTIVRAHLVHRRRAARRCP.

The segment covering 1–23 (MKCGRKRRRRRRHACKRKKRACK) has biased composition (basic residues). The disordered stretch occupies residues 1-26 (MKCGRKRRRRRRHACKRKKRACKQRS).

In terms of tissue distribution, testis.

It is found in the nucleus. The protein localises to the chromosome. Its function is as follows. Protamines substitute for histones in the chromatin of sperm during the haploid phase of spermatogenesis. They compact sperm DNA into a highly condensed, stable and inactive complex. The sequence is that of Protamine Z2 from Scyliorhinus canicula (Small-spotted catshark).